Reading from the N-terminus, the 215-residue chain is Ras-related protein RAB1BV (215 aa).

Residues 22-29, 70-74, and 128-131 each bind GTP; these read GDSGVGKS, DTAGQ, and NKAD. Residues 183–215 form a disordered region; sequence DSDTRQEAQPSITIKPADQSGNQAAAKSACCGS. S-geranylgeranyl cysteine attachment occurs at residues Cys212 and Cys213.

Belongs to the small GTPase superfamily. Rab family.

The protein localises to the cell membrane. This chain is Ras-related protein RAB1BV (RAB1BV), found in Beta vulgaris (Sugar beet).